The primary structure comprises 214 residues: Octanoyltransferase (214 aa).

The 181-residue stretch at 34 to 214 (GLQKELVWLL…KFNEIFSSFN (181 aa)) folds into the BPL/LPL catalytic domain. Residues 73-80 (RGGKYTYH), 145-147 (AFG), and 158-160 (GVS) contribute to the substrate site. Residue cysteine 176 is the Acyl-thioester intermediate of the active site.

This sequence belongs to the LipB family.

It localises to the cytoplasm. The enzyme catalyses octanoyl-[ACP] + L-lysyl-[protein] = N(6)-octanoyl-L-lysyl-[protein] + holo-[ACP] + H(+). It functions in the pathway protein modification; protein lipoylation via endogenous pathway; protein N(6)-(lipoyl)lysine from octanoyl-[acyl-carrier-protein]: step 1/2. Functionally, catalyzes the transfer of endogenously produced octanoic acid from octanoyl-acyl-carrier-protein onto the lipoyl domains of lipoate-dependent enzymes. Lipoyl-ACP can also act as a substrate although octanoyl-ACP is likely to be the physiological substrate. The polypeptide is Octanoyltransferase (Ehrlichia canis (strain Jake)).